We begin with the raw amino-acid sequence, 436 residues long: Xylose isomerase (436 aa).

Residues H100 and D103 contribute to the active site. Mg(2+) is bound by residues E231, E267, H270, D295, D306, D308, and D338.

It belongs to the xylose isomerase family. In terms of assembly, homotetramer. Mg(2+) serves as cofactor.

The protein resides in the cytoplasm. It catalyses the reaction alpha-D-xylose = alpha-D-xylulofuranose. This chain is Xylose isomerase, found in Chelativorans sp. (strain BNC1).